We begin with the raw amino-acid sequence, 364 residues long: Putative transport protein BUsg_115 (364 aa).

9 helical membrane passes run 18–38, 40–60, 65–85, 161–181, 215–235, 243–263, 280–300, 309–329, and 331–351; these read IFII…ILGF, WASM…KFLG, VAVI…IVFL, GLFI…YWNG, ALGV…GLLI, LLMI…PILI, LLLI…PFFI, FLIL…GLFI, and PVVL…ISIA.

It belongs to the autoinducer-2 exporter (AI-2E) (TC 2.A.86) family.

It is found in the cell membrane. The protein is Putative transport protein BUsg_115 of Buchnera aphidicola subsp. Schizaphis graminum (strain Sg).